The primary structure comprises 229 residues: Ribulose-phosphate 3-epimerase (229 aa).

Ser-13 contacts substrate. Positions 36, 38, and 69 each coordinate a divalent metal cation. Asp-38 functions as the Proton acceptor in the catalytic mechanism. Residues His-69, 145–148, 178–180, and 200–201 each bind substrate; these read GFGG, DGG, and GS. Asp-178 lines the a divalent metal cation pocket. Asp-178 (proton donor) is an active-site residue.

It belongs to the ribulose-phosphate 3-epimerase family. It depends on a divalent metal cation as a cofactor.

It catalyses the reaction D-ribulose 5-phosphate = D-xylulose 5-phosphate. It participates in carbohydrate degradation. Functionally, catalyzes the reversible epimerization of D-ribulose 5-phosphate to D-xylulose 5-phosphate. The protein is Ribulose-phosphate 3-epimerase of Mycobacterium bovis (strain ATCC BAA-935 / AF2122/97).